The primary structure comprises 565 residues: Sulfite reductase [NADPH] hemoprotein beta-component (565 aa).

Residues C429, C435, C474, and C478 each coordinate [4Fe-4S] cluster. C478 contacts siroheme.

The protein belongs to the nitrite and sulfite reductase 4Fe-4S domain family. In terms of assembly, alpha(8)-beta(8). The alpha component is a flavoprotein, the beta component is a hemoprotein. The cofactor is siroheme. It depends on [4Fe-4S] cluster as a cofactor.

It carries out the reaction hydrogen sulfide + 3 NADP(+) + 3 H2O = sulfite + 3 NADPH + 4 H(+). Its pathway is sulfur metabolism; hydrogen sulfide biosynthesis; hydrogen sulfide from sulfite (NADPH route): step 1/1. Its function is as follows. Component of the sulfite reductase complex that catalyzes the 6-electron reduction of sulfite to sulfide. This is one of several activities required for the biosynthesis of L-cysteine from sulfate. This chain is Sulfite reductase [NADPH] hemoprotein beta-component, found in Shewanella loihica (strain ATCC BAA-1088 / PV-4).